A 91-amino-acid chain; its full sequence is Putative methyltransferase YfdM (91 aa).

The polypeptide is Putative methyltransferase YfdM (yfdM) (Escherichia coli (strain K12)).